Here is a 286-residue protein sequence, read N- to C-terminus: Versiconal hemiacetal acetate esterase stcI (286 aa).

Residues 54 to 56 (HAG) carry the Involved in the stabilization of the negatively charged intermediate by the formation of the oxyanion hole motif. Active-site residues include Ser-123, Asp-226, and His-256.

Belongs to the 'GDXG' lipolytic enzyme family.

It catalyses the reaction (2S,3S)-versiconal hemiacetal acetate + H2O = (2S-3S)-versiconal hemiacetal + acetate + H(+). The catalysed reaction is (3S)-versiconol acetate + H2O = (S)-versiconol + acetate + H(+). It participates in mycotoxin biosynthesis; sterigmatocystin biosynthesis. Esterase; part of the gene cluster that mediates the biosynthesis of sterigmatocystin (ST), a polyketide-derived furanocoumarin which is part of the most toxic and carcinogenic compounds among the known mycotoxins. The first step in the biosynthesis of sterigmatocystin is the production of hexanoate by the fatty acid synthase (FAS) units stcJ and stcK. The polyketide backbone is assembled by the non-reducing polyketide synthase stcA by condensation of the starter hexanoyl-CoA and 7 malonyl-CoA extender units followed by cyclization and release of norsolorinic acid. Norsolorinic acid is the first stable intermediate in the biosynthesis of sterigmatocystin and is converted into averantin (AVN) by the ketoreductase stcE which reduces the hexanoate ketone to an alcohol. Averantin is then oxidized into 5'-hydroxyaverantin (HAVN) by the cytochrome P450 monooxygenase stcF. 5'-hydroxyaverantin is further converted to 5'-oxyaverantin (OAVN) by the 5'-hydroxyaverantin dehydrogenase stcG. The next step is the conversion of OAVN into averufin (AVF) which is catalyzed by a yet to be identified enzyme. The cytochrome P450 monooxygenase stcB and the flavin-binding monooxygenase stcW are both required for the conversion of averufin to 1-hydroxyversicolorone. The esterase stcI probably catalyzes the formation of versiconal hemiacetal acetate from 1-hydroxyversicolorone. The oxydoreductase stcN then probably catalyzes the biosynthetic step from versiconal to versicolorin B (VERB). The next step is performed by the versicolorin B desaturase stcL to produce versicolorin A (VERA). The ketoreductase stcU and the cytochrome P450 monooxygenase stcS are involved in the conversion of versicolorin A to demethylsterigmatocystin. The Baeyer-Villiger oxidas stcQ and the reductase stcR might be involved in the biosynthetic step from versicolorin A to demethylsterigmatocystin. The final step in the biosynthesis of sterigmatocystin is the methylation of demethylsterigmatocystin catalyzed by the methyltransferase stcP. This chain is Versiconal hemiacetal acetate esterase stcI, found in Emericella nidulans (strain FGSC A4 / ATCC 38163 / CBS 112.46 / NRRL 194 / M139) (Aspergillus nidulans).